A 294-amino-acid polypeptide reads, in one-letter code: Tyrosine-protein phosphatase (294 aa).

The first 24 residues, Met-1 to Ala-24, serve as a signal peptide directing secretion. Residue Cys-182 is the Phosphocysteine intermediate of the active site. 2 stretches are compositionally biased toward basic and acidic residues: residues Gln-221–His-231 and Pro-238–His-247. Residues Gln-221–Ala-252 are disordered.

It belongs to the protein-tyrosine phosphatase family. In terms of assembly, monomer.

The enzyme catalyses O-phospho-L-tyrosyl-[protein] + H2O = L-tyrosyl-[protein] + phosphate. This chain is Tyrosine-protein phosphatase (iphP), found in Nostoc commune.